The sequence spans 113 residues: Nucleoid-associated protein Cthe_2143 (113 aa).

This sequence belongs to the YbaB/EbfC family. As to quaternary structure, homodimer.

Its subcellular location is the cytoplasm. It localises to the nucleoid. Binds to DNA and alters its conformation. May be involved in regulation of gene expression, nucleoid organization and DNA protection. This is Nucleoid-associated protein Cthe_2143 from Acetivibrio thermocellus (strain ATCC 27405 / DSM 1237 / JCM 9322 / NBRC 103400 / NCIMB 10682 / NRRL B-4536 / VPI 7372) (Clostridium thermocellum).